A 312-amino-acid chain; its full sequence is MVREDRSTWKANYFTKLVELFEEYPKCLLVGVDNVGSKQMQEIRQAMRGHAEILMGKNTMIRKALRGHLGKNPSLEKLLPHIVENVGFVFTKEDLGEIRSKLLENRKGAPAKAGAIAPCDVKLPPQNTGMGPEKTSFFQALQIPTKIARGTIEILNDVHLIKEGDKVGASESALLNMLGVTPFSYGLVVRQVYDDGTLYTPEVLDMTTEELRKRFLSGVRNVASVSLAVNYPTLASVAHSLANGLQNMLGVAAVTDVSFKEAETIKAFIADPSKFAAAAPAAAAAPAAAAPAAKKEEPKEESDDDMGFGLFD.

The tract at residues A287–D312 is disordered.

It belongs to the universal ribosomal protein uL10 family. In terms of assembly, P0 forms a pentameric complex by interaction with dimers of P1 and P2. In terms of processing, phosphorylated.

In terms of biological role, ribosomal protein P0 is the functional equivalent of E.coli protein L10. The protein is Large ribosomal subunit protein uL10 of Caenorhabditis elegans.